The chain runs to 156 residues: Small ribosomal subunit protein uS7 (156 aa).

This sequence belongs to the universal ribosomal protein uS7 family. Part of the 30S ribosomal subunit. Contacts proteins S9 and S11.

Functionally, one of the primary rRNA binding proteins, it binds directly to 16S rRNA where it nucleates assembly of the head domain of the 30S subunit. Is located at the subunit interface close to the decoding center, probably blocks exit of the E-site tRNA. The chain is Small ribosomal subunit protein uS7 from Mesorhizobium japonicum (strain LMG 29417 / CECT 9101 / MAFF 303099) (Mesorhizobium loti (strain MAFF 303099)).